The following is a 546-amino-acid chain: Phosphomethylpyrimidine synthase (546 aa).

A compositionally biased stretch (polar residues) spans 1–19; the sequence is MSTPSSRSQAPETVTTGPI. The tract at residues 1 to 20 is disordered; sequence MSTPSSRSQAPETVTTGPIQ. Residues N146, M175, Y204, H240, 260 to 262, 301 to 304, and E340 each bind substrate; these read SRG and DGLR. Residue H344 coordinates Zn(2+). Y367 contacts substrate. A Zn(2+)-binding site is contributed by H408. C488, C491, and C496 together coordinate [4Fe-4S] cluster.

It belongs to the ThiC family. It depends on [4Fe-4S] cluster as a cofactor.

The catalysed reaction is 5-amino-1-(5-phospho-beta-D-ribosyl)imidazole + S-adenosyl-L-methionine = 4-amino-2-methyl-5-(phosphooxymethyl)pyrimidine + CO + 5'-deoxyadenosine + formate + L-methionine + 3 H(+). The protein operates within cofactor biosynthesis; thiamine diphosphate biosynthesis. Functionally, catalyzes the synthesis of the hydroxymethylpyrimidine phosphate (HMP-P) moiety of thiamine from aminoimidazole ribotide (AIR) in a radical S-adenosyl-L-methionine (SAM)-dependent reaction. The polypeptide is Phosphomethylpyrimidine synthase (Mycobacteroides abscessus (strain ATCC 19977 / DSM 44196 / CCUG 20993 / CIP 104536 / JCM 13569 / NCTC 13031 / TMC 1543 / L948) (Mycobacterium abscessus)).